Here is a 171-residue protein sequence, read N- to C-terminus: MKCPFCGDPNTQVADTRENEGGEVVRRRRRCPKCDKRFTTYERIDLKMPHIVKRNGNRSEFEHDKLAGSMKLALRKRPVTLEALDAAVDRIEAKLLALGEQEVPSEKVGELVMRELKKLDKVAYIRFASVYRNFADVDEFAEVIREVKARPKRNRPAEPPEPTSENDLFRS.

The segment at 3-34 (CPFCGDPNTQVADTRENEGGEVVRRRRRCPKC) is a zinc-finger region. Residues 49-139 (PHIVKRNGNR…VYRNFADVDE (91 aa)) enclose the ATP-cone domain. Positions 148–171 (KARPKRNRPAEPPEPTSENDLFRS) are disordered.

This sequence belongs to the NrdR family. It depends on Zn(2+) as a cofactor.

Negatively regulates transcription of bacterial ribonucleotide reductase nrd genes and operons by binding to NrdR-boxes. In Aromatoleum aromaticum (strain DSM 19018 / LMG 30748 / EbN1) (Azoarcus sp. (strain EbN1)), this protein is Transcriptional repressor NrdR.